We begin with the raw amino-acid sequence, 274 residues long: Regulator of G-protein signaling rgs-11 (274 aa).

The region spanning 137–256 (SPGLLAASKY…LEDPLYLDLL (120 aa)) is the RGS domain.

This Caenorhabditis elegans protein is Regulator of G-protein signaling rgs-11 (rgs-11).